The primary structure comprises 294 residues: 4-hydroxy-tetrahydrodipicolinate synthase (294 aa).

Threonine 44 contributes to the pyruvate binding site. Tyrosine 132 (proton donor/acceptor) is an active-site residue. Lysine 160 (schiff-base intermediate with substrate) is an active-site residue. Residue isoleucine 205 participates in pyruvate binding.

This sequence belongs to the DapA family. Homotetramer; dimer of dimers.

It is found in the cytoplasm. The enzyme catalyses L-aspartate 4-semialdehyde + pyruvate = (2S,4S)-4-hydroxy-2,3,4,5-tetrahydrodipicolinate + H2O + H(+). It participates in amino-acid biosynthesis; L-lysine biosynthesis via DAP pathway; (S)-tetrahydrodipicolinate from L-aspartate: step 3/4. Its function is as follows. Catalyzes the condensation of (S)-aspartate-beta-semialdehyde [(S)-ASA] and pyruvate to 4-hydroxy-tetrahydrodipicolinate (HTPA). This Kosmotoga olearia (strain ATCC BAA-1733 / DSM 21960 / TBF 19.5.1) protein is 4-hydroxy-tetrahydrodipicolinate synthase.